Here is a 31-residue protein sequence, read N- to C-terminus: Cytochrome b6-f complex subunit 6 (31 aa).

Residues 3-23 (TIISYFGFLLASIIFTLILFI) traverse the membrane as a helical segment.

The protein belongs to the PetL family. In terms of assembly, the 4 large subunits of the cytochrome b6-f complex are cytochrome b6, subunit IV (17 kDa polypeptide, PetD), cytochrome f and the Rieske protein, while the 4 small subunits are PetG, PetL, PetM and PetN. The complex functions as a dimer.

Its subcellular location is the plastid. It localises to the chloroplast thylakoid membrane. Functionally, component of the cytochrome b6-f complex, which mediates electron transfer between photosystem II (PSII) and photosystem I (PSI), cyclic electron flow around PSI, and state transitions. PetL is important for photoautotrophic growth as well as for electron transfer efficiency and stability of the cytochrome b6-f complex. This chain is Cytochrome b6-f complex subunit 6, found in Abies homolepis (Nikko fir).